Consider the following 357-residue polypeptide: Peptide chain release factor 1 (357 aa).

At Gln-236 the chain carries N5-methylglutamine.

The protein belongs to the prokaryotic/mitochondrial release factor family. Post-translationally, methylated by PrmC. Methylation increases the termination efficiency of RF1.

The protein resides in the cytoplasm. Functionally, peptide chain release factor 1 directs the termination of translation in response to the peptide chain termination codons UAG and UAA. The sequence is that of Peptide chain release factor 1 from Mycobacterium ulcerans (strain Agy99).